The primary structure comprises 339 residues: DNA-directed RNA polymerase subunit alpha (339 aa).

The interval 1-233 (MVREEVAGST…DLFLPFLHAE (233 aa)) is alpha N-terminal domain (alpha-NTD). The alpha C-terminal domain (alpha-CTD) stretch occupies residues 264–339 (KKGIPLNCIF…IDLLKNKLSF (76 aa)).

This sequence belongs to the RNA polymerase alpha chain family. In terms of assembly, in plastids the minimal PEP RNA polymerase catalytic core is composed of four subunits: alpha, beta, beta', and beta''. When a (nuclear-encoded) sigma factor is associated with the core the holoenzyme is formed, which can initiate transcription.

It is found in the plastid. Its subcellular location is the chloroplast. It carries out the reaction RNA(n) + a ribonucleoside 5'-triphosphate = RNA(n+1) + diphosphate. In terms of biological role, DNA-dependent RNA polymerase catalyzes the transcription of DNA into RNA using the four ribonucleoside triphosphates as substrates. In Eremopyrum distans, this protein is DNA-directed RNA polymerase subunit alpha.